The primary structure comprises 111 residues: PCNA-associated factor (111 aa).

Position 8 is a phosphoserine (Ser8). Residue Lys15 forms a Glycyl lysine isopeptide (Lys-Gly) (interchain with G-Cter in ubiquitin) linkage. The short motif at 23–34 is the D-box element; it reads RKVLGSSTSATN. The interval 23–111 is disordered; sequence RKVLGSSTSA…QPDHTNDEKE (89 aa). Lys24 is modified (N6-acetyllysine; alternate). A Glycyl lysine isopeptide (Lys-Gly) (interchain with G-Cter in ubiquitin); alternate cross-link involves residue Lys24. 3 positions are modified to phosphoserine: Ser28, Ser31, and Ser72. Over residues 28–40 the composition is skewed to low complexity; the sequence is SSTSATNSTSVSS. Residues 62–72 carry the PIP-box motif; that stretch reads QKGIGEFFRLS. Over residues 72-81 the composition is skewed to basic and acidic residues; sequence SPKDSEKENQ. A KEN box motif is present at residues 78–80; the sequence is KEN. An Initiation motif motif is present at residues 85 to 97; it reads EAGSSGLGKAKRK.

Interacts (when monoubiquitinated at Lys-15 and Lys-24) with PCNA. Interacts with isoform 2/p33ING1b of ING1. Interacts with BRCA1. Monoubiquitinated at Lys-15 and Lys-24 during normal S phase, promoting its association with PCNA. Also diubiquitinated at these 2 sites. Following DNA damage, monoubiquitin chains at Lys-15 and Lys-24 are probably extended, leading to disrupt the interaction with PCNA. Polyubiquitinated by the APC/C complex at the mitotic exit, leading to its degradation by the proteasome. As to expression, expressed predominantly in liver, pancreas and placenta. Not detected in heart or brain. Highly expressed in a number of tumors, especially esophageal tumors, in anaplastic thyroid carcinomas, adrenocortical carcinomas, and in non-small-cell lung cancer lines.

It localises to the nucleus. The protein resides in the cytoplasm. It is found in the perinuclear region. Its function is as follows. PCNA-binding protein that acts as a regulator of DNA repair during DNA replication. Following DNA damage, the interaction with PCNA is disrupted, facilitating the interaction between monoubiquitinated PCNA and the translesion DNA synthesis DNA polymerase eta (POLH) at stalled replisomes, facilitating the bypass of replication-fork-blocking lesions. Also acts as a regulator of centrosome number. This Homo sapiens (Human) protein is PCNA-associated factor.